Reading from the N-terminus, the 236-residue chain is Carboxymethylenebutenolidase (236 aa).

Active-site residues include cysteine 123, aspartate 171, and histidine 202.

The protein belongs to the dienelactone hydrolase family. In terms of assembly, monomer.

The catalysed reaction is 2-(5-oxo-2,5-dihydrofuran-2-ylidene)acetate + H2O = 4-oxohex-2-enedioate + H(+). The protein operates within aromatic compound metabolism; 3-chlorocatechol degradation. Its function is as follows. Ring cleavage of cyclic ester dienelactone to produce maleylacetate. This Pseudomonas knackmussii (strain DSM 6978 / CCUG 54928 / LMG 23759 / B13) protein is Carboxymethylenebutenolidase (clcD).